A 231-amino-acid polypeptide reads, in one-letter code: Orotidine 5'-phosphate decarboxylase (231 aa).

Residues D11, K33, 60-69 (DLKLHDIPNT), T119, R181, Q190, G210, and R211 contribute to the substrate site. K62 serves as the catalytic Proton donor.

This sequence belongs to the OMP decarboxylase family. Type 1 subfamily. As to quaternary structure, homodimer.

It catalyses the reaction orotidine 5'-phosphate + H(+) = UMP + CO2. It functions in the pathway pyrimidine metabolism; UMP biosynthesis via de novo pathway; UMP from orotate: step 2/2. Functionally, catalyzes the decarboxylation of orotidine 5'-monophosphate (OMP) to uridine 5'-monophosphate (UMP). The protein is Orotidine 5'-phosphate decarboxylase of Malacoplasma penetrans (strain HF-2) (Mycoplasma penetrans).